A 76-amino-acid chain; its full sequence is Exodeoxyribonuclease 7 small subunit (76 aa).

The protein belongs to the XseB family. As to quaternary structure, heterooligomer composed of large and small subunits.

The protein localises to the cytoplasm. The enzyme catalyses Exonucleolytic cleavage in either 5'- to 3'- or 3'- to 5'-direction to yield nucleoside 5'-phosphates.. In terms of biological role, bidirectionally degrades single-stranded DNA into large acid-insoluble oligonucleotides, which are then degraded further into small acid-soluble oligonucleotides. This Bacillus cereus (strain ATCC 14579 / DSM 31 / CCUG 7414 / JCM 2152 / NBRC 15305 / NCIMB 9373 / NCTC 2599 / NRRL B-3711) protein is Exodeoxyribonuclease 7 small subunit.